A 61-amino-acid chain; its full sequence is Small ribosomal subunit protein uS14 (61 aa).

The Zn(2+) site is built by C24, C27, C40, and C43.

It belongs to the universal ribosomal protein uS14 family. Zinc-binding uS14 subfamily. Part of the 30S ribosomal subunit. Contacts proteins S3 and S10. Zn(2+) is required as a cofactor.

Functionally, binds 16S rRNA, required for the assembly of 30S particles and may also be responsible for determining the conformation of the 16S rRNA at the A site. This chain is Small ribosomal subunit protein uS14, found in Anaeromyxobacter dehalogenans (strain 2CP-1 / ATCC BAA-258).